The following is a 152-amino-acid chain: UPF0756 membrane protein JDM1_1594 (152 aa).

4 consecutive transmembrane segments (helical) span residues 25 to 45 (ATVV…LTTI), 52 to 72 (WGVT…QIGF), 85 to 105 (WIAV…VGLL), and 115 to 135 (LVFG…GPII).

Belongs to the UPF0756 family.

Its subcellular location is the cell membrane. This Lactiplantibacillus plantarum (strain JDM1) (Lactobacillus plantarum) protein is UPF0756 membrane protein JDM1_1594.